Here is a 322-residue protein sequence, read N- to C-terminus: N-acetyl-gamma-glutamyl-phosphate reductase 2 (322 aa).

The active site involves Cys117.

It belongs to the NAGSA dehydrogenase family. Type 2 subfamily.

It localises to the cytoplasm. It catalyses the reaction N-acetyl-L-glutamate 5-semialdehyde + phosphate + NADP(+) = N-acetyl-L-glutamyl 5-phosphate + NADPH + H(+). Its pathway is amino-acid biosynthesis; L-arginine biosynthesis; N(2)-acetyl-L-ornithine from L-glutamate: step 3/4. Its function is as follows. Catalyzes the NADPH-dependent reduction of N-acetyl-5-glutamyl phosphate to yield N-acetyl-L-glutamate 5-semialdehyde. The protein is N-acetyl-gamma-glutamyl-phosphate reductase 2 of Nostoc sp. (strain PCC 7120 / SAG 25.82 / UTEX 2576).